Reading from the N-terminus, the 328-residue chain is Purple acid phosphatase 7 (328 aa).

Positions 1–24 are cleaved as a signal peptide; the sequence is MKMHVCFSVILMFLSIFFINGALS. Residue D48 participates in Fe cation binding. N-linked (GlcNAc...) asparagine glycosylation occurs at N56. Residues D81 and Y84 each coordinate Fe cation. D81 provides a ligand contact to Zn(2+). Residues N119 and H213 each coordinate Zn(2+). The Proton donor role is filled by H222. H248 provides a ligand contact to Zn(2+). Position 248 to 250 (248 to 250) interacts with substrate; it reads HDH. H250 lines the Fe cation pocket.

This sequence belongs to the metallophosphoesterase superfamily. Purple acid phosphatase family. As to quaternary structure, homodimer. It depends on Fe cation as a cofactor. Zn(2+) serves as cofactor. As to expression, expressed in roots, stems, leaves, flowers and siliques.

The protein resides in the secreted. The enzyme catalyses a phosphate monoester + H2O = an alcohol + phosphate. The sequence is that of Purple acid phosphatase 7 (PAP7) from Arabidopsis thaliana (Mouse-ear cress).